We begin with the raw amino-acid sequence, 429 residues long: Glucose-1-phosphate adenylyltransferase (429 aa).

Alpha-D-glucose 1-phosphate contacts are provided by residues glycine 162, 177–178 (EK), and serine 209.

The protein belongs to the bacterial/plant glucose-1-phosphate adenylyltransferase family. Homotetramer.

The enzyme catalyses alpha-D-glucose 1-phosphate + ATP + H(+) = ADP-alpha-D-glucose + diphosphate. It participates in glycan biosynthesis; glycogen biosynthesis. Involved in the biosynthesis of ADP-glucose, a building block required for the elongation reactions to produce glycogen. Catalyzes the reaction between ATP and alpha-D-glucose 1-phosphate (G1P) to produce pyrophosphate and ADP-Glc. This chain is Glucose-1-phosphate adenylyltransferase, found in Trichormus variabilis (strain ATCC 29413 / PCC 7937) (Anabaena variabilis).